Here is a 361-residue protein sequence, read N- to C-terminus: Putative agmatine deiminase (361 aa).

C354 functions as the Amidino-cysteine intermediate in the catalytic mechanism.

Belongs to the agmatine deiminase family.

It catalyses the reaction agmatine + H2O = N-carbamoylputrescine + NH4(+). The sequence is that of Putative agmatine deiminase from Streptococcus pneumoniae (strain ATCC 700669 / Spain 23F-1).